Consider the following 360-residue polypeptide: Photosystem II protein D1 (360 aa).

The next 3 helical transmembrane spans lie at Tyr-29–Ser-46, His-118–Leu-133, and Trp-142–Ala-156. His-118 lines the chlorophyll a pocket. Pheophytin a is bound at residue Tyr-126. Asp-170 and Glu-189 together coordinate [CaMn4O5] cluster. The chain crosses the membrane as a helical span at residues Phe-197–Leu-218. His-198 serves as a coordination point for chlorophyll a. Residues His-215 and Ser-264–Phe-265 each bind a quinone. His-215 provides a ligand contact to Fe cation. Residue His-272 participates in Fe cation binding. A helical transmembrane segment spans residues Phe-274–Met-288. [CaMn4O5] cluster is bound by residues His-332, Glu-333, Asp-342, and Ala-344. The propeptide occupies Ser-345–Gly-360.

The protein belongs to the reaction center PufL/M/PsbA/D family. In terms of assembly, PSII is composed of 1 copy each of membrane proteins PsbA, PsbB, PsbC, PsbD, PsbE, PsbF, PsbH, PsbI, PsbJ, PsbK, PsbL, PsbM, PsbT, PsbX, PsbY, PsbZ, Psb30/Ycf12, at least 3 peripheral proteins of the oxygen-evolving complex and a large number of cofactors. It forms dimeric complexes. It depends on The D1/D2 heterodimer binds P680, chlorophylls that are the primary electron donor of PSII, and subsequent electron acceptors. It shares a non-heme iron and each subunit binds pheophytin, quinone, additional chlorophylls, carotenoids and lipids. D1 provides most of the ligands for the Mn4-Ca-O5 cluster of the oxygen-evolving complex (OEC). There is also a Cl(-1) ion associated with D1 and D2, which is required for oxygen evolution. The PSII complex binds additional chlorophylls, carotenoids and specific lipids. as a cofactor. In terms of processing, tyr-161 forms a radical intermediate that is referred to as redox-active TyrZ, YZ or Y-Z. C-terminally processed by CTPA; processing is essential to allow assembly of the oxygen-evolving complex and thus photosynthetic growth.

The protein localises to the plastid. The protein resides in the chloroplast thylakoid membrane. The catalysed reaction is 2 a plastoquinone + 4 hnu + 2 H2O = 2 a plastoquinol + O2. Its function is as follows. Photosystem II (PSII) is a light-driven water:plastoquinone oxidoreductase that uses light energy to abstract electrons from H(2)O, generating O(2) and a proton gradient subsequently used for ATP formation. It consists of a core antenna complex that captures photons, and an electron transfer chain that converts photonic excitation into a charge separation. The D1/D2 (PsbA/PsbD) reaction center heterodimer binds P680, the primary electron donor of PSII as well as several subsequent electron acceptors. This is Photosystem II protein D1 from Phaeodactylum tricornutum (strain CCAP 1055/1).